The following is a 400-amino-acid chain: Aspartate aminotransferase (400 aa).

Residues Gly42 and Asn180 each contribute to the L-aspartate site. Position 241 is an N6-(pyridoxal phosphate)lysine (Lys241). Arg373 is a binding site for L-aspartate.

The protein belongs to the class-I pyridoxal-phosphate-dependent aminotransferase family. Homodimer. The cofactor is pyridoxal 5'-phosphate.

It is found in the cytoplasm. It catalyses the reaction L-aspartate + 2-oxoglutarate = oxaloacetate + L-glutamate. The protein is Aspartate aminotransferase (aspC) of Sulfolobus acidocaldarius (strain ATCC 33909 / DSM 639 / JCM 8929 / NBRC 15157 / NCIMB 11770).